Here is a 173-residue protein sequence, read N- to C-terminus: Translation initiation factor IF-3 (173 aa).

This sequence belongs to the IF-3 family. In terms of assembly, monomer.

It is found in the cytoplasm. In terms of biological role, IF-3 binds to the 30S ribosomal subunit and shifts the equilibrium between 70S ribosomes and their 50S and 30S subunits in favor of the free subunits, thus enhancing the availability of 30S subunits on which protein synthesis initiation begins. The polypeptide is Translation initiation factor IF-3 (Enterococcus faecalis (strain ATCC 700802 / V583)).